A 290-amino-acid polypeptide reads, in one-letter code: D-tagatose-1,6-bisphosphate aldolase subunit KbaY (290 aa).

The Proton donor role is filled by aspartate 82. 2 residues coordinate Zn(2+): histidine 83 and histidine 180. Glycine 181 provides a ligand contact to dihydroxyacetone phosphate. Histidine 208 lines the Zn(2+) pocket. Dihydroxyacetone phosphate contacts are provided by residues 209 to 211 (GAS) and 230 to 233 (NVAT).

Belongs to the class II fructose-bisphosphate aldolase family. TagBP aldolase KbaY subfamily. In terms of assembly, homotetramer. Forms a complex with KbaZ. The cofactor is Zn(2+).

The enzyme catalyses D-tagatofuranose 1,6-bisphosphate = D-glyceraldehyde 3-phosphate + dihydroxyacetone phosphate. Its pathway is carbohydrate metabolism; D-tagatose 6-phosphate degradation; D-glyceraldehyde 3-phosphate and glycerone phosphate from D-tagatose 6-phosphate: step 2/2. In terms of biological role, catalytic subunit of the tagatose-1,6-bisphosphate aldolase KbaYZ, which catalyzes the reversible aldol condensation of dihydroxyacetone phosphate (DHAP or glycerone-phosphate) with glyceraldehyde 3-phosphate (G3P) to produce tagatose 1,6-bisphosphate (TBP). Requires KbaZ subunit for full activity and stability. This Salmonella arizonae (strain ATCC BAA-731 / CDC346-86 / RSK2980) protein is D-tagatose-1,6-bisphosphate aldolase subunit KbaY.